Reading from the N-terminus, the 34-residue chain is Photosystem II reaction center protein Psb30 (34 aa).

A helical transmembrane segment spans residues 6 to 26 (IVAQLLSLALVTLSGPAVIFL).

This sequence belongs to the Psb30/Ycf12 family. PSII is composed of 1 copy each of membrane proteins PsbA, PsbB, PsbC, PsbD, PsbE, PsbF, PsbH, PsbI, PsbJ, PsbK, PsbL, PsbM, PsbT, PsbX, PsbY, PsbZ, Psb30/Ycf12, peripheral proteins of the oxygen-evolving complex and a large number of cofactors. It forms dimeric complexes.

It localises to the plastid. The protein localises to the chloroplast thylakoid membrane. Its function is as follows. A core subunit of photosystem II (PSII), probably helps stabilize the reaction center. The protein is Photosystem II reaction center protein Psb30 of Emiliania huxleyi (Coccolithophore).